The primary structure comprises 391 residues: Esterase (391 aa).

Residues 1-26 form the signal peptide; that stretch reads MEFPETNNNPIITLSFLLCMLSLAYA. S41 functions as the Nucleophile in the catalytic mechanism. 3 N-linked (GlcNAc...) asparagine glycosylation sites follow: N186, N193, and N313. Residues D347 and H350 contribute to the active site.

The protein belongs to the 'GDSL' lipolytic enzyme family. Post-translationally, the N-terminus is blocked. Glycosylated.

In terms of biological role, has lipase and esterase activities. May be involved in plant defense. The sequence is that of Esterase from Hevea brasiliensis (Para rubber tree).